The primary structure comprises 449 residues: UDP-N-acetylglucosamine 1-carboxyvinyltransferase (449 aa).

The span at 1-12 shows a compositional bias: basic and acidic residues; the sequence is MQVTVNEHDAVE. Positions 1–30 are disordered; that stretch reads MQVTVNEHDAVERVATATPAGNREAHAHGT. 51–52 contributes to the phosphoenolpyruvate binding site; the sequence is KN. R121 contributes to the UDP-N-acetyl-alpha-D-glucosamine binding site. The active-site Proton donor is the C145. Residue C145 is modified to 2-(S-cysteinyl)pyruvic acid O-phosphothioketal. UDP-N-acetyl-alpha-D-glucosamine contacts are provided by residues 150-154, D333, and I355; that span reads RPVDQ.

The protein belongs to the EPSP synthase family. MurA subfamily.

The protein resides in the cytoplasm. It catalyses the reaction phosphoenolpyruvate + UDP-N-acetyl-alpha-D-glucosamine = UDP-N-acetyl-3-O-(1-carboxyvinyl)-alpha-D-glucosamine + phosphate. It functions in the pathway cell wall biogenesis; peptidoglycan biosynthesis. Cell wall formation. Adds enolpyruvyl to UDP-N-acetylglucosamine. The protein is UDP-N-acetylglucosamine 1-carboxyvinyltransferase of Burkholderia pseudomallei (strain 1710b).